A 382-amino-acid chain; its full sequence is 3-isopropylmalate dehydrogenase (382 aa).

91–102 (GPKWGTGSVRPE) is a binding site for NAD(+). Residues arginine 109, arginine 119, arginine 148, and aspartate 240 each coordinate substrate. Mg(2+) is bound by residues aspartate 240, aspartate 265, and aspartate 269. An NAD(+)-binding site is contributed by 304–315 (GSAPDLTENKVN).

It belongs to the isocitrate and isopropylmalate dehydrogenases family. As to quaternary structure, homodimer. Mg(2+) is required as a cofactor. Requires Mn(2+) as cofactor.

The protein localises to the cytoplasm. The catalysed reaction is (2R,3S)-3-isopropylmalate + NAD(+) = 4-methyl-2-oxopentanoate + CO2 + NADH. It functions in the pathway amino-acid biosynthesis; L-leucine biosynthesis; L-leucine from 3-methyl-2-oxobutanoate: step 3/4. In terms of biological role, catalyzes the oxidation of 3-carboxy-2-hydroxy-4-methylpentanoate (3-isopropylmalate) to 3-carboxy-4-methyl-2-oxopentanoate. The product decarboxylates to 4-methyl-2 oxopentanoate. The polypeptide is 3-isopropylmalate dehydrogenase (LEU2) (Debaryomyces hansenii (strain ATCC 36239 / CBS 767 / BCRC 21394 / JCM 1990 / NBRC 0083 / IGC 2968) (Yeast)).